The primary structure comprises 299 residues: ATP phosphoribosyltransferase (299 aa).

It belongs to the ATP phosphoribosyltransferase family. Long subfamily. It depends on Mg(2+) as a cofactor.

It is found in the cytoplasm. It catalyses the reaction 1-(5-phospho-beta-D-ribosyl)-ATP + diphosphate = 5-phospho-alpha-D-ribose 1-diphosphate + ATP. The protein operates within amino-acid biosynthesis; L-histidine biosynthesis; L-histidine from 5-phospho-alpha-D-ribose 1-diphosphate: step 1/9. Its activity is regulated as follows. Feedback inhibited by histidine. In terms of biological role, catalyzes the condensation of ATP and 5-phosphoribose 1-diphosphate to form N'-(5'-phosphoribosyl)-ATP (PR-ATP). Has a crucial role in the pathway because the rate of histidine biosynthesis seems to be controlled primarily by regulation of HisG enzymatic activity. The chain is ATP phosphoribosyltransferase from Shewanella sediminis (strain HAW-EB3).